Here is a 213-residue protein sequence, read N- to C-terminus: Transcription antitermination protein NusB (213 aa).

This sequence belongs to the NusB family.

Involved in transcription antitermination. Required for transcription of ribosomal RNA (rRNA) genes. Binds specifically to the boxA antiterminator sequence of the ribosomal RNA (rrn) operons. This chain is Transcription antitermination protein NusB, found in Picosynechococcus sp. (strain ATCC 27264 / PCC 7002 / PR-6) (Agmenellum quadruplicatum).